A 505-amino-acid polypeptide reads, in one-letter code: Histidine ammonia-lyase (505 aa).

The 5-imidazolinone (Ala-Gly) cross-link spans 141 to 143 (ASG). Ser-142 is subject to 2,3-didehydroalanine (Ser).

This sequence belongs to the PAL/histidase family. In terms of processing, contains an active site 4-methylidene-imidazol-5-one (MIO), which is formed autocatalytically by cyclization and dehydration of residues Ala-Ser-Gly.

It is found in the cytoplasm. It carries out the reaction L-histidine = trans-urocanate + NH4(+). It participates in amino-acid degradation; L-histidine degradation into L-glutamate; N-formimidoyl-L-glutamate from L-histidine: step 1/3. The protein is Histidine ammonia-lyase of Bacillus cereus (strain ATCC 10987 / NRS 248).